A 68-amino-acid chain; its full sequence is uncharacterized protein (68 aa).

This is an uncharacterized protein from Invertebrate iridescent virus 3 (IIV-3).